The following is a 906-amino-acid chain: Cadherin-2 (906 aa).

Positions 1 to 25 (MCRIAGAPRTLLPLLAALLQASVEA) are cleaved as a signal peptide. The propeptide occupies 26–159 (SGEIALCKTG…HNGYLQRQKR (134 aa)). Serine 96 and serine 135 each carry phosphoserine. 5 consecutive Cadherin domains span residues 160–267 (DWVI…RPEF), 268–382 (LHQV…PPEF), 383–497 (TAMT…NPYF), 498–603 (APNP…DNAP), and 604–714 (QVLP…DVDR). At 160–724 (DWVIPPINLP…IVGAGLGTGA (565 aa)) the chain is on the extracellular side. Ca(2+) is bound at residue glutamate 170. Asparagine 190 carries N-linked (GlcNAc...) asparagine glycosylation. Aspartate 226, glutamate 228, aspartate 259, methionine 260, asparagine 261, aspartate 262, and asparagine 263 together coordinate Ca(2+). Asparagine 273 carries N-linked (GlcNAc...) asparagine glycosylation. Aspartate 293, aspartate 295, and asparagine 301 together coordinate Ca(2+). Asparagine 325 carries N-linked (GlcNAc...) asparagine glycosylation. Residue aspartate 353 coordinates Ca(2+). 5 N-linked (GlcNAc...) asparagine glycosylation sites follow: asparagine 402, asparagine 572, asparagine 622, asparagine 651, and asparagine 692. A helical membrane pass occupies residues 725–745 (IIAILLCIIILLILVLMFVVW). The Cytoplasmic portion of the chain corresponds to 746-906 (MKRRDKERQA…LAEMYGGGDD (161 aa)). Over residues 863–880 (SGSTAGSLSSLNSSSSGG) the composition is skewed to low complexity. Residues 863-884 (SGSTAGSLSSLNSSSSGGEQDY) are disordered.

In terms of assembly, homodimer (via extracellular region). Can also form heterodimers with other cadherins (via extracellular region). Dimerization occurs in trans, i.e. with a cadherin chain from another cell. Interacts with CDCP1. Interacts with PCDH8; this complex may also include TAOK2. The interaction with PCDH8 may lead to internalization through TAOK2/p38 MAPK pathway. Identified in a complex containing FGFR4, NCAM1, CDH2, PLCG1, FRS2, SRC, SHC1, GAP43 and CTTN. May interact with OBSCN (via protein kinase domain 2). Interacts with FBXO45. Post-translationally, cleaved by MMP24. Ectodomain cleavage leads to the generation of a soluble 90 kDa N-terminal soluble fragment and a 45 kDa membrane-bound C-terminal fragment 1 (CTF1), which is further cleaved by gamma-secretase into a 35 kDa. Cleavage in neural stem cells by MMP24 affects CDH2-mediated anchorage of neural stem cells to ependymocytes in the adult subependymal zone, leading to modulate neural stem cell quiescence. In terms of processing, may be phosphorylated by OBSCN.

Its subcellular location is the cell membrane. It is found in the sarcolemma. The protein localises to the cell junction. The protein resides in the cell surface. It localises to the desmosome. Its subcellular location is the adherens junction. Calcium-dependent cell adhesion protein; preferentially mediates homotypic cell-cell adhesion by dimerization with a CDH2 chain from another cell. Cadherins may thus contribute to the sorting of heterogeneous cell types. Acts as a regulator of neural stem cells quiescence by mediating anchorage of neural stem cells to ependymocytes in the adult subependymal zone: upon cleavage by MMP24, CDH2-mediated anchorage is affected, leading to modulate neural stem cell quiescence. Plays a role in cell-to-cell junction formation between pancreatic beta cells and neural crest stem (NCS) cells, promoting the formation of processes by NCS cells. Required for proper neurite branching. Required for pre- and postsynaptic organization. CDH2 may be involved in neuronal recognition mechanism. In hippocampal neurons, may regulate dendritic spine density. The sequence is that of Cadherin-2 (CDH2) from Otolemur garnettii (Small-eared galago).